The chain runs to 492 residues: Xaa-Pro dipeptidase (492 aa).

An N-acetylalanine modification is found at Ala2. A Phosphoserine modification is found at Ser167. His255 is an a dipeptide binding site. Positions 276, 287, and 370 each coordinate Mn(2+). Asp287 is an a dipeptide binding site. A dipeptide contacts are provided by His377 and Arg398. The Mn(2+) site is built by Glu412 and Glu452.

It belongs to the peptidase M24B family. Eukaryotic-type prolidase subfamily. In terms of assembly, homodimer. The cofactor is Mn(2+).

It catalyses the reaction Xaa-L-Pro dipeptide + H2O = an L-alpha-amino acid + L-proline. In terms of biological role, dipeptidase that catalyzes the hydrolysis of dipeptides with a prolyl (Xaa-Pro) or hydroxyprolyl residue in the C-terminal position. The preferred dipeptide substrate is Gly-Pro, but other Xaa-Pro dipeptides, such as Ala-Pro, Met-Pro, Phe-Pro, Val-Pro and Leu-Pro, can be cleaved. Plays an important role in collagen metabolism because the high level of iminoacids in collagen. The chain is Xaa-Pro dipeptidase (Pepd) from Rattus norvegicus (Rat).